A 770-amino-acid polypeptide reads, in one-letter code: Protein argonaute (770 aa).

Residues 1–151 (MKAKVVINLV…VIHIIHQIQS (151 aa)) form an N-terminal domain region. The PAZ domain maps to 154-272 (TLWELVNKDP…LLPQLVVPTY (119 aa)). Residues 276-361 (QLESDVAKEI…SQLLLWTNYS (86 aa)) are interdomain connector. Residues 362-544 (RKYPVILPYE…LSKLGVKYYV (183 aa)) are mid domain. A Piwi domain is found at 473-756 (GLAFIAARNK…FANAIRNEWK (284 aa)). Catalysis depends on residues Asp-558, Glu-596, Asp-628, and His-745. Residue Asp-558 participates in Mn(2+) binding. The Mn(2+) site is built by Asp-628, His-745, and Val-770.

It belongs to the argonaute family. Long pAgo subfamily. Monomer. Mn(2+) is required as a cofactor.

Inhibited at greater than 500 mM NaCl. A DNA-guided ssDNA endonuclease that may play a role in defense against invading mobile genetic elements. Uses short 5'-phospho-ssDNA sequences as guides (gDNA) to bind complementary target strands, resulting in cleavage of the target DNA (tDNA). Endonucleolytically cleaves DNA in short dsDNA (the gDNA indicates where to cleave on the tDNA). Efficient guide-dependent target DNA cleavage requires a minimal gDNA length of 15 nucleotides (nt) and works up to at least 31 nt. Overexpression decreases plasmid transformation efficiency. Has no appreciable activity with gRNA or on target RNA. Also has guide-independent activity on plasmid DNA called 'chopping'. The cleavage site is 10 nucleotides (nt) downstream of the target residue base-paired with the 5'-end of the gDNA, cleavage is insensitive to adenine methylation. DNA cleavage produces 5'-phosphomonoesters (as it can be ligated by T4 DNA ligase). The protein is Protein argonaute of Pyrococcus furiosus (strain ATCC 43587 / DSM 3638 / JCM 8422 / Vc1).